The sequence spans 330 residues: Tetraacyldisaccharide 4'-kinase (330 aa).

Position 58 to 65 (58 to 65 (TVGGSGKT)) interacts with ATP.

Belongs to the LpxK family.

The enzyme catalyses a lipid A disaccharide + ATP = a lipid IVA + ADP + H(+). It participates in glycolipid biosynthesis; lipid IV(A) biosynthesis; lipid IV(A) from (3R)-3-hydroxytetradecanoyl-[acyl-carrier-protein] and UDP-N-acetyl-alpha-D-glucosamine: step 6/6. Functionally, transfers the gamma-phosphate of ATP to the 4'-position of a tetraacyldisaccharide 1-phosphate intermediate (termed DS-1-P) to form tetraacyldisaccharide 1,4'-bis-phosphate (lipid IVA). The sequence is that of Tetraacyldisaccharide 4'-kinase from Shewanella pealeana (strain ATCC 700345 / ANG-SQ1).